The primary structure comprises 93 residues: Large ribosomal subunit protein uL23cy (93 aa).

The protein belongs to the universal ribosomal protein uL23 family. As to quaternary structure, part of the 50S ribosomal subunit.

The protein localises to the plastid. The protein resides in the chloroplast. Binds to 23S rRNA. This is Large ribosomal subunit protein uL23cy (rpl23-B) from Agrostis stolonifera (Creeping bentgrass).